The following is a 391-amino-acid chain: Pectate lyase D (391 aa).

Positions 1–31 (MNNTRVSFRSTKSLLAAIIATSMMTWSVNRA) are cleaved as a signal peptide. Aspartate 170 and aspartate 213 together coordinate Ca(2+). The active site involves arginine 266.

This sequence belongs to the polysaccharide lyase 1 family. PLBC subfamily. Ca(2+) serves as cofactor.

The protein resides in the secreted. It catalyses the reaction Eliminative cleavage of (1-&gt;4)-alpha-D-galacturonan to give oligosaccharides with 4-deoxy-alpha-D-galact-4-enuronosyl groups at their non-reducing ends.. The protein operates within glycan metabolism; pectin degradation; 2-dehydro-3-deoxy-D-gluconate from pectin: step 2/5. Functionally, involved in maceration and soft-rotting of plant tissue. This chain is Pectate lyase D (pelD), found in Dickeya chrysanthemi (Pectobacterium chrysanthemi).